The following is a 97-amino-acid chain: Small ribosomal subunit protein bS20c (97 aa).

A compositionally biased stretch (polar residues) spans 1-15 (MSKNVSAIKKNQVSL). A disordered region spans residues 1–20 (MSKNVSAIKKNQVSLRNKRK).

It belongs to the bacterial ribosomal protein bS20 family.

It is found in the plastid. The protein localises to the chloroplast. Functionally, binds directly to 16S ribosomal RNA. This chain is Small ribosomal subunit protein bS20c, found in Gracilaria tenuistipitata var. liui (Red alga).